A 126-amino-acid polypeptide reads, in one-letter code: Thioredoxin H-type 1 (126 aa).

The region spanning 2 to 120 (AANDATSSEE…LQQTIVKHAA (119 aa)) is the Thioredoxin domain. Catalysis depends on nucleophile residues Cys-46 and Cys-49. Cys-46 and Cys-49 are oxidised to a cystine.

Belongs to the thioredoxin family. Plant H-type subfamily.

It localises to the cytoplasm. Functionally, participates in various redox reactions through the reversible oxidation of the active center dithiol to a disulfide. The H form is known to activate a number of cytosolic enzymes. The chain is Thioredoxin H-type 1 from Nicotiana tabacum (Common tobacco).